A 150-amino-acid polypeptide reads, in one-letter code: Transcriptional repressor NrdR (150 aa).

The segment at 3–34 (CPYCQFEDTRVIDSRLASEGEQVRRRRECNRC) is a zinc-finger region. The region spanning 49–139 (PRIVKRDGTR…VYRSFEDVSA (91 aa)) is the ATP-cone domain.

The protein belongs to the NrdR family. Zn(2+) serves as cofactor.

Negatively regulates transcription of bacterial ribonucleotide reductase nrd genes and operons by binding to NrdR-boxes. In Alkalilimnicola ehrlichii (strain ATCC BAA-1101 / DSM 17681 / MLHE-1), this protein is Transcriptional repressor NrdR.